We begin with the raw amino-acid sequence, 398 residues long: UPF0496 protein At5g66660 (398 aa).

2 consecutive transmembrane segments (helical) span residues 240–260 and 263–283; these read VFFA…TTMS and PVVC…GKWF.

This sequence belongs to the UPF0496 family.

It is found in the membrane. This chain is UPF0496 protein At5g66660, found in Arabidopsis thaliana (Mouse-ear cress).